Consider the following 315-residue polypeptide: ADP/ATP translocase 4 (315 aa).

Over methionine 1 to serine 19 the chain is Mitochondrial intermembrane. The stretch at serine 18 to leucine 110 is one Solcar 1 repeat. A helical membrane pass occupies residues phenylalanine 20–glutamine 49. At valine 50–asparagine 86 the chain is on the mitochondrial matrix side. A helical membrane pass occupies residues leucine 87–phenylalanine 111. The ADP site is built by arginine 92 and lysine 104. Topologically, residues methionine 112–phenylalanine 121 are mitochondrial intermembrane. The chain crosses the membrane as a helical span at residues tryptophan 122–valine 142. 2 Solcar repeats span residues arginine 123–leucine 213 and threonine 220–phenylalanine 307. Over valine 143 to glycine 190 the chain is Mitochondrial matrix. The chain crosses the membrane as a helical span at residues valine 191–lysine 211. Residues glycine 212 to phenylalanine 222 lie on the Mitochondrial intermembrane side of the membrane. A helical transmembrane segment spans residues leucine 223–phenylalanine 243. The Mitochondrial matrix segment spans residues aspartate 244–glycine 283. Arginine 247 lines the ADP pocket. Residues arginine 247–methionine 252 are important for transport activity. Residues arginine 247–methionine 252 carry the Nucleotide carrier signature motif motif. The chain crosses the membrane as a helical span at residues alanine 284–tyrosine 301. At aspartate 302–arginine 315 the chain is on the mitochondrial intermembrane side.

This sequence belongs to the mitochondrial carrier (TC 2.A.29) family. Monomer.

The protein resides in the mitochondrion inner membrane. It is found in the membrane. Its subcellular location is the cell projection. The protein localises to the cilium. It localises to the flagellum membrane. It carries out the reaction ADP(in) + ATP(out) = ADP(out) + ATP(in). It catalyses the reaction dATP(out) + ADP(in) = dATP(in) + ADP(out). The enzyme catalyses dADP(in) + ADP(out) = dADP(out) + ADP(in). The catalysed reaction is H(+)(in) = H(+)(out). Its activity is regulated as follows. The matrix-open state (m-state) is inhibited by the membrane-permeable bongkrekic acid (BKA). The cytoplasmic-open state (c-state) is inhibited by the membrane-impermeable toxic inhibitor carboxyatractyloside (CATR). Proton transporter activity is inhibited by ADP:ATP antiporter activity. In terms of biological role, ADP:ATP antiporter that mediates import of ADP into the mitochondrial matrix for ATP synthesis, and export of ATP out to fuel the cell. Cycles between the cytoplasmic-open state (c-state) and the matrix-open state (m-state): operates by the alternating access mechanism with a single substrate-binding site intermittently exposed to either the cytosolic (c-state) or matrix (m-state) side of the inner mitochondrial membrane. Specifically required during spermatogenesis, probably to mediate ADP:ATP exchange in spermatocytes. Large ATP supplies from mitochondria may be critical for normal progression of spermatogenesis during early stages of meiotic prophase I, including DNA double-strand break repair and chromosomal synapsis. In addition to its ADP:ATP antiporter activity, also involved in mitochondrial uncoupling and mitochondrial permeability transition pore (mPTP) activity. Plays a role in mitochondrial uncoupling by acting as a proton transporter: proton transport uncouples the proton flows via the electron transport chain and ATP synthase to reduce the efficiency of ATP production and cause mitochondrial thermogenesis. Proton transporter activity is inhibited by ADP:ATP antiporter activity, suggesting that SLC25A31/ANT4 acts as a master regulator of mitochondrial energy output by maintaining a delicate balance between ATP production (ADP:ATP antiporter activity) and thermogenesis (proton transporter activity). Proton transporter activity requires free fatty acids as cofactor, but does not transport it. Among nucleotides, may also exchange ADP for dATP and dADP. Also plays a key role in mPTP opening, a non-specific pore that enables free passage of the mitochondrial membranes to solutes of up to 1.5 kDa, and which contributes to cell death. It is however unclear if SLC25A31/ANT4 constitutes a pore-forming component of mPTP or regulates it. This chain is ADP/ATP translocase 4, found in Macaca fascicularis (Crab-eating macaque).